Here is a 209-residue protein sequence, read N- to C-terminus: Urease accessory protein UreE (209 aa).

Basic and acidic residues predominate over residues 170 to 196 (EHHGHSHSHSHDHDHDHDHDHDHDHQH). The disordered stretch occupies residues 170–209 (EHHGHSHSHSHDHDHDHDHDHDHDHQHGPSCSHGHHHGHR).

This sequence belongs to the UreE family.

It is found in the cytoplasm. Functionally, involved in urease metallocenter assembly. Binds nickel. Probably functions as a nickel donor during metallocenter assembly. This is Urease accessory protein UreE from Burkholderia mallei (strain NCTC 10247).